A 229-amino-acid polypeptide reads, in one-letter code: Large ribosomal subunit protein uL1 (229 aa).

Belongs to the universal ribosomal protein uL1 family. Part of the 50S ribosomal subunit.

Binds directly to 23S rRNA. The L1 stalk is quite mobile in the ribosome, and is involved in E site tRNA release. In terms of biological role, protein L1 is also a translational repressor protein, it controls the translation of the L11 operon by binding to its mRNA. The sequence is that of Large ribosomal subunit protein uL1 from Actinobacillus succinogenes (strain ATCC 55618 / DSM 22257 / CCUG 43843 / 130Z).